The sequence spans 163 residues: Probable histone H2A.4 (163 aa).

2 disordered regions span residues 1–30 and 134–163; these read MEVGAKVPKKAGAGGRRGGGGPKKKPVSRS and SAAAKEAKEGKTPKSPKKATTKSPKKAAAA. A compositionally biased stretch (gly residues) spans 12-21; the sequence is GAGGRRGGGG. The span at 147–163 shows a compositional bias: basic residues; the sequence is KSPKKATTKSPKKAAAA. 2 consecutive short sequence motifs (SPKK motif) follow at residues 148 to 151 and 156 to 159; these read SPKK.

Belongs to the histone H2A family. As to quaternary structure, the nucleosome is a histone octamer containing two molecules each of H2A, H2B, H3 and H4 assembled in one H3-H4 heterotetramer and two H2A-H2B heterodimers. The octamer wraps approximately 147 bp of DNA.

It localises to the nucleus. The protein resides in the chromosome. Its function is as follows. Core component of nucleosome. Nucleosomes wrap and compact DNA into chromatin, limiting DNA accessibility to the cellular machineries which require DNA as a template. Histones thereby play a central role in transcription regulation, DNA repair, DNA replication and chromosomal stability. DNA accessibility is regulated via a complex set of post-translational modifications of histones, also called histone code, and nucleosome remodeling. The chain is Probable histone H2A.4 from Oryza sativa subsp. indica (Rice).